The sequence spans 343 residues: Dihydroorotase (343 aa).

His-13 and His-15 together coordinate Zn(2+). Substrate is bound by residues 15–17 (HLR) and Asn-41. Zn(2+) is bound by residues Lys-99, His-136, and His-174. Residue Lys-99 is modified to N6-carboxylysine. His-136 contacts substrate. Leu-219 serves as a coordination point for substrate. Residue Asp-247 coordinates Zn(2+). Asp-247 is a catalytic residue. Substrate contacts are provided by His-251 and Ala-263.

It belongs to the metallo-dependent hydrolases superfamily. DHOase family. Class II DHOase subfamily. In terms of assembly, homodimer. It depends on Zn(2+) as a cofactor.

The enzyme catalyses (S)-dihydroorotate + H2O = N-carbamoyl-L-aspartate + H(+). The protein operates within pyrimidine metabolism; UMP biosynthesis via de novo pathway; (S)-dihydroorotate from bicarbonate: step 3/3. Functionally, catalyzes the reversible cyclization of carbamoyl aspartate to dihydroorotate. The polypeptide is Dihydroorotase (Alkalilimnicola ehrlichii (strain ATCC BAA-1101 / DSM 17681 / MLHE-1)).